The sequence spans 449 residues: Bifunctional F420 biosynthesis protein FbiB (449 aa).

The segment at 1–245 (MSPAGEHGTA…PGTEDLFWLG (245 aa)) is coenzyme F420:L-glutamate ligase. Residues 21-24 (LPEF), S51, and K56 contribute to the GTP site. D110 lines the a divalent metal cation pocket. N113 is a GTP binding site. Residues D151 and T152 each contribute to the a divalent metal cation site. The dehydro-coenzyme F420-0 reductase stretch occupies residues 246–449 (TAEAIELGRR…ADPGDLLIRK (204 aa)). FMN is bound by residues 261 to 265 (RRSVR) and A289. D321 serves as a coordination point for coenzyme F420-(gamma-Glu)n. G400 and R437 together coordinate FMN.

In the N-terminal section; belongs to the CofE family. Mg(2+) is required as a cofactor. Mn(2+) serves as cofactor. Requires K(+) as cofactor.

It carries out the reaction oxidized coenzyme F420-0 + GTP + L-glutamate = oxidized coenzyme F420-1 + GDP + phosphate + H(+). The catalysed reaction is oxidized coenzyme F420-1 + GTP + L-glutamate = oxidized coenzyme F420-2 + GDP + phosphate + H(+). The enzyme catalyses oxidized coenzyme F420-(gamma-L-Glu)(n) + GTP + L-glutamate = oxidized coenzyme F420-(gamma-L-Glu)(n+1) + GDP + phosphate + H(+). It catalyses the reaction oxidized coenzyme F420-0 + FMN + H(+) = dehydro coenzyme F420-0 + FMNH2. The protein operates within cofactor biosynthesis; coenzyme F420 biosynthesis. Bifunctional enzyme that catalyzes the GTP-dependent successive addition of multiple gamma-linked L-glutamates to the L-lactyl phosphodiester of 7,8-didemethyl-8-hydroxy-5-deazariboflavin (F420-0) to form polyglutamated F420 derivatives, and the FMNH2-dependent reduction of dehydro-F420-0 to form F420-0. This chain is Bifunctional F420 biosynthesis protein FbiB, found in Mycobacterium avium (strain 104).